We begin with the raw amino-acid sequence, 308 residues long: Porphobilinogen deaminase (308 aa).

Cys-242 is subject to S-(dipyrrolylmethanemethyl)cysteine.

It belongs to the HMBS family. Monomer. It depends on dipyrromethane as a cofactor.

The catalysed reaction is 4 porphobilinogen + H2O = hydroxymethylbilane + 4 NH4(+). It functions in the pathway porphyrin-containing compound metabolism; protoporphyrin-IX biosynthesis; coproporphyrinogen-III from 5-aminolevulinate: step 2/4. Its function is as follows. Tetrapolymerization of the monopyrrole PBG into the hydroxymethylbilane pre-uroporphyrinogen in several discrete steps. The protein is Porphobilinogen deaminase of Alkalilimnicola ehrlichii (strain ATCC BAA-1101 / DSM 17681 / MLHE-1).